Reading from the N-terminus, the 396-residue chain is Dimethyladenosine transferase 2, mitochondrial (396 aa).

Residues 1–19 (MWIPVVGLPRRLRLSALAG) constitute a mitochondrion transit peptide. The segment at 44–64 (LSDSSPQLWPEPDFRNPPRKA) is disordered. S-adenosyl-L-methionine is bound by residues valine 75, glutamate 124, and aspartate 150. The segment at 330–331 (RR) is DNA-binding.

Belongs to the class I-like SAM-binding methyltransferase superfamily. rRNA adenine N(6)-methyltransferase family. KsgA subfamily. As to quaternary structure, homodimer. Component of the mitochondrial transcription initiation complex, composed at least of TFB2M, TFAM and POLRMT. In this complex TFAM recruits POLRMT to the promoter whereas TFB2M induces structural changes in POLRMT to enable promoter opening and trapping of the DNA non-template strand. Interacts with mitochondrial RNA polymerase POLRMT. Interacts with TFAM. In terms of tissue distribution, ubiquitously expressed.

It localises to the mitochondrion. The catalysed reaction is adenosine in rRNA + S-adenosyl-L-methionine = N(6)-methyladenosine in rRNA + S-adenosyl-L-homocysteine + H(+). S-adenosyl-L-methionine-dependent rRNA methyltransferase which may methylate two specific adjacent adenosines in the loop of a conserved hairpin near the 3'-end of 12S mitochondrial rRNA. Component of the mitochondrial transcription initiation complex, composed at least of TFB2M, TFAM and POLRMT that is required for basal transcription of mitochondrial DNA. In this complex, TFAM recruits POLRMT to a specific promoter whereas TFB2M induces structural changes in POLRMT to enable promoter opening and trapping of the DNA non-template strand. Stimulates transcription independently of the methyltransferase activity. The protein is Dimethyladenosine transferase 2, mitochondrial of Homo sapiens (Human).